We begin with the raw amino-acid sequence, 479 residues long: Bifunctional NAD(P)H-hydrate repair enzyme Nnr (479 aa).

Residues 1 to 214 (MTVIIQGRSF…GIGIPLLAEI (214 aa)) form an NAD(P)H-hydrate epimerase region. One can recognise a YjeF N-terminal domain in the interval 31-214 (MRRIDQNAQA…GIGIPLLAEI (184 aa)). The segment at 76–80 (NNGGD) is NADPHX 1; for epimerase activity. K(+) is bound by residues asparagine 77 and aspartate 146. Residues 150 to 156 (GTGGTGS) are NADPHX 1; for epimerase activity. Aspartate 179 provides a ligand contact to (6S)-NADPHX. Position 182 (serine 182) interacts with K(+). The 259-residue stretch at 216 to 474 (TGPGDLLILR…TAVPQVLFRS (259 aa)) folds into the YjeF C-terminal domain. An ADP-dependent (S)-NAD(P)H-hydrate dehydratase region spans residues 216–479 (TGPGDLLILR…VLFRSTSERE (264 aa)). Glycine 312 contacts (6S)-NADPHX. The interval 353–359 (HAGEFAR) is NADPHX 2; for dehydratase activity. ADP contacts are provided by residues 388–392 (KGAVD) and 407–416 (TPAMTTGGTG). Aspartate 417 contacts (6S)-NADPHX.

This sequence in the N-terminal section; belongs to the NnrE/AIBP family. The protein in the C-terminal section; belongs to the NnrD/CARKD family. K(+) serves as cofactor.

The catalysed reaction is (6S)-NADHX + ADP = AMP + phosphate + NADH + H(+). It carries out the reaction (6S)-NADPHX + ADP = AMP + phosphate + NADPH + H(+). The enzyme catalyses (6R)-NADHX = (6S)-NADHX. It catalyses the reaction (6R)-NADPHX = (6S)-NADPHX. Its function is as follows. Bifunctional enzyme that catalyzes the epimerization of the S- and R-forms of NAD(P)HX and the dehydration of the S-form of NAD(P)HX at the expense of ADP, which is converted to AMP. This allows the repair of both epimers of NAD(P)HX, a damaged form of NAD(P)H that is a result of enzymatic or heat-dependent hydration. The protein is Bifunctional NAD(P)H-hydrate repair enzyme Nnr (nnr) of Methanospirillum hungatei JF-1 (strain ATCC 27890 / DSM 864 / NBRC 100397 / JF-1).